The sequence spans 339 residues: MACPIRVAVTQAEPVYLDLAASVKKACGLIAEAAQNGAKLVAFSECWLPGYPAWIWARPVDFELQTRYIYNSLPIESEAMELVKATAKEHSIAVALGFSEQSPSHSIYISQAIISPQGEVVMHRRKIKPTHMERTLFGDGSGADLNNVVEVDFGAEHGKIKVGCFACWEHTQPLLKYHSISQGEAIHISMWPPIDPSAGVDHPGLWSMTADGCQNLSQTYAIESTAYVLHSTSVCTQKGIETLKTQDGLSCRQPGGGHSCVIGPDGRRLTAPLGDGSPDAEGIVYADLDLTKVVATRGFLDIVGHYSRPDLLWLGVDREQKENIIAKQHKAAEQEAVQG.

The CN hydrolase domain occupies 5–290; sequence IRVAVTQAEP…EGIVYADLDL (286 aa). E45 (proton acceptor) is an active-site residue. Residue K126 is part of the active site. C167 functions as the Nucleophile in the catalytic mechanism.

The protein belongs to the carbon-nitrogen hydrolase superfamily. Nitrilase family.

It catalyses the reaction a nitrile + 2 H2O = a carboxylate + NH4(+). The catalysed reaction is 4-chlorophenylacetonitrile + 2 H2O = 4-chlorophenylacetate + NH4(+). Its function is as follows. Nitrilase that hydrolyzes preferentially phenylacetonitrile, (R,S)-mandelonitrile, and 3-indolylacetonitrile. The polypeptide is Arylacetonitrilase (Fusarium vanettenii (strain ATCC MYA-4622 / CBS 123669 / FGSC 9596 / NRRL 45880 / 77-13-4) (Fusarium solani subsp. pisi)).